The primary structure comprises 257 residues: Type III pantothenate kinase (257 aa).

7–14 (DIGNSHTV) serves as a coordination point for ATP. 106 to 109 (GTDR) serves as a coordination point for substrate. Aspartate 108 functions as the Proton acceptor in the catalytic mechanism. Position 128 (aspartate 128) interacts with K(+). Threonine 132 is an ATP binding site. Threonine 184 is a substrate binding site.

The protein belongs to the type III pantothenate kinase family. In terms of assembly, homodimer. It depends on NH4(+) as a cofactor. The cofactor is K(+).

The protein localises to the cytoplasm. The enzyme catalyses (R)-pantothenate + ATP = (R)-4'-phosphopantothenate + ADP + H(+). The protein operates within cofactor biosynthesis; coenzyme A biosynthesis; CoA from (R)-pantothenate: step 1/5. Its function is as follows. Catalyzes the phosphorylation of pantothenate (Pan), the first step in CoA biosynthesis. The polypeptide is Type III pantothenate kinase (Nocardioides sp. (strain ATCC BAA-499 / JS614)).